Consider the following 366-residue polypeptide: Histidinol-phosphate aminotransferase (366 aa).

Position 228 is an N6-(pyridoxal phosphate)lysine (K228).

It belongs to the class-II pyridoxal-phosphate-dependent aminotransferase family. Histidinol-phosphate aminotransferase subfamily. In terms of assembly, homodimer. Pyridoxal 5'-phosphate serves as cofactor.

The catalysed reaction is L-histidinol phosphate + 2-oxoglutarate = 3-(imidazol-4-yl)-2-oxopropyl phosphate + L-glutamate. Its pathway is amino-acid biosynthesis; L-histidine biosynthesis; L-histidine from 5-phospho-alpha-D-ribose 1-diphosphate: step 7/9. This Corynebacterium glutamicum (strain R) protein is Histidinol-phosphate aminotransferase.